Consider the following 393-residue polypeptide: Bifunctional enzyme Fae/Hps (393 aa).

Residues 1 to 161 are formaldehyde-activating enzyme; the sequence is MYLVGEALIG…YEKDRAAHGI (161 aa). The Proton donor role is filled by His17. 5 residues coordinate substrate: Asp19, Leu48, Lys66, Thr68, and Gln83. Residues 162–393 form a 3-hexulose-6-phosphate synthase region; that stretch reads MGFKVQRLWD…IDQFRIMTDF (232 aa).

This sequence in the N-terminal section; belongs to the formaldehyde-activating enzyme family. It in the C-terminal section; belongs to the HPS/KGPDC family. HPS subfamily.

It carries out the reaction 5,6,7,8-tetrahydromethanopterin + formaldehyde = 5,10-methylenetetrahydromethanopterin + H2O. It catalyses the reaction D-ribulose 5-phosphate + formaldehyde = D-arabino-hex-3-ulose 6-phosphate. It functions in the pathway carbohydrate biosynthesis; D-ribose 5-phosphate biosynthesis. In terms of biological role, catalyzes the condensation of formaldehyde with tetrahydromethanopterin (H(4)MPT) to 5,10-methylenetetrahydromethanopterin. Its function is as follows. Catalyzes the reversible formation of ribulose-5-phosphate and formaldehyde from 3-hexulose-6-phosphate. This chain is Bifunctional enzyme Fae/Hps, found in Methanoregula boonei (strain DSM 21154 / JCM 14090 / 6A8).